Reading from the N-terminus, the 2609-residue chain is Beige protein homolog 1 (2609 aa).

Disordered regions lie at residues D1654–S1679 and I1691–T1729. Residues M1711–K1723 are compositionally biased toward acidic residues. Residues E1735 to V1870 enclose the BEACH-type PH domain. Residues A1907–R2202 form the BEACH domain. WD repeat units lie at residues K2249–M2290, L2294–A2332, G2340–S2379, N2429–L2475, and A2507–H2546. An FYVE-type zinc finger spans residues D2550–P2604.

The protein resides in the cytoplasm. It localises to the membrane. Its function is as follows. May be involved in protein sorting and cell wall formation. The chain is Beige protein homolog 1 (lvs1) from Schizosaccharomyces pombe (strain 972 / ATCC 24843) (Fission yeast).